Reading from the N-terminus, the 307-residue chain is MELSEISFSIPAADDFYDDPCFSTSDMHFFEDMDPRLVHAGLLKPDDCCSSSSLSPSSSSASPSSLLHIHHHTEAEDDEHIRAPSGHHHAGRCLLWACKACKRKTTNVDRRKAATLRERRRLSKVNEAFETLKRCTNTNPNQRLPKVEILRNAISYIESLQALLRGGQDEAFYTVLEHYSGDSDASSPRSNCSDGMTDFNGPTCQSNRRGSYYSSYFSQTPKAFAPPGSAIFVPPGSVNNCSAWFCFAGSLKAERNSSLDCLSSIVERISTATSSGPPPVDGRGSPGPLQASSPRSSREPNLIYQVL.

The region spanning 109–160 (DRRKAATLRERRRLSKVNEAFETLKRCTNTNPNQRLPKVEILRNAISYIESL) is the bHLH domain. Residues 271–307 (TATSSGPPPVDGRGSPGPLQASSPRSSREPNLIYQVL) are disordered.

Efficient DNA binding requires dimerization with another bHLH protein. As to expression, expressed in fast and myotomal muscle. Very weak expression in brain, skin and gonads.

It localises to the nucleus. Its function is as follows. May act as a transcriptional activator that promotes transcription of muscle-specific target genes and plays a role in muscle differentiation. This chain is Myoblast determination protein 1 homolog (myod), found in Takifugu rubripes (Japanese pufferfish).